The chain runs to 347 residues: Tsukushi (347 aa).

A signal peptide spans 1–19 (MASLLCLFFSLLGLAAIGA). The LRRNT domain maps to 20–61 (VKNCHPQCRCEVETFGLFDSFSLTKVDCSRIGPGNTPVPIPL). LRR repeat units lie at residues 62-83 (DTSH…MLSG), 88-109 (TLVS…AFSK), 112-133 (YLET…CFTG), 135-156 (PLVE…LFTT), 160-175 (DLPI…LTSI), 185-205 (YIKS…LNGI), 206-227 (PLQY…AFDS), 230-252 (ELVH…AFRS), 255-277 (NLQA…VFSG), and 280-301 (SLQE…VFMQ). Asparagine 285 carries an N-linked (GlcNAc...) asparagine glycan.

In terms of assembly, forms a ternary complex with chordin/CHRD and BMP4.

Its subcellular location is the secreted. Contributes to various developmental events through its interactions with multiple signaling pathways. Dorsalizing factor which functions as an inhibitor of bone morphogenetic proteins during gastrulation. In Danio rerio (Zebrafish), this protein is Tsukushi (tsku).